The following is a 375-amino-acid chain: OVARIAN TUMOR DOMAIN-containing deubiquitinating enzyme 7 (375 aa).

The segment covering 1–18 (MAKTKQQKSKPKKQPHQK) has biased composition (basic residues). Residues 1 to 23 (MAKTKQQKSKPKKQPHQKQGKDC) form a disordered region. The region spanning 37–161 (LKIIQVTADG…GEHYNSVRSK (125 aa)) is the OTU domain. D45 is a catalytic residue. The Nucleophile role is filled by C48. The active site involves H154. A UBA-like domain is found at 202–250 (HVNAGAIKVVMSGSCCDNTEKAEQVLLQVNGDVDAAIEFLIADQGMESL). 2 stretches are compositionally biased toward polar residues: residues 251 to 264 (TEND…SDTI) and 290 to 305 (ASGN…CTTQ). Residues 251-306 (TENDTETASASDTINPKHASDSPMENTEQAREELIEEESASGNNSETVQAKCTTQT) are disordered. The Nuclear localization signal signature appears at 308–315 (DKKIPRNK).

This sequence belongs to the peptidase C85 family.

The protein resides in the nucleus. The catalysed reaction is Thiol-dependent hydrolysis of ester, thioester, amide, peptide and isopeptide bonds formed by the C-terminal Gly of ubiquitin (a 76-residue protein attached to proteins as an intracellular targeting signal).. Hydrolase that can remove conjugated ubiquitin from proteins in vitro and may therefore play an important regulatory role at the level of protein turnover by preventing degradation. Cysteine protease with a preference for 'Lys-63' over 'Lys-48' over 'Met-1' -linked ubiquitin (UB) tetramers as substrates. Also cleaves RUB-GST fusion. The sequence is that of OVARIAN TUMOR DOMAIN-containing deubiquitinating enzyme 7 from Arabidopsis thaliana (Mouse-ear cress).